Here is a 587-residue protein sequence, read N- to C-terminus: Proteasome-associated ATPase (587 aa).

Residues 1-94 (MAARDDAEAR…KEEVDRLAQP (94 aa)) adopt a coiled-coil conformation. Residue 276 to 281 (GCGKTL) participates in ATP binding. The docks into pockets in the proteasome alpha-ring stretch occupies residues 586 to 587 (YL).

Belongs to the AAA ATPase family. In terms of assembly, homohexamer. Assembles into a hexameric ring structure that caps the 20S proteasome core. Strongly interacts with the prokaryotic ubiquitin-like protein Pup through a hydrophobic interface; the interacting region of ARC lies in its N-terminal coiled-coil domain. There is one Pup binding site per ARC hexamer ring. Upon ATP-binding, the C-terminus of ARC interacts with the alpha-rings of the proteasome core, possibly by binding to the intersubunit pockets.

It functions in the pathway protein degradation; proteasomal Pup-dependent pathway. Its function is as follows. ATPase which is responsible for recognizing, binding, unfolding and translocation of pupylated proteins into the bacterial 20S proteasome core particle. May be essential for opening the gate of the 20S proteasome via an interaction with its C-terminus, thereby allowing substrate entry and access to the site of proteolysis. Thus, the C-termini of the proteasomal ATPase may function like a 'key in a lock' to induce gate opening and therefore regulate proteolysis. This chain is Proteasome-associated ATPase, found in Streptosporangium roseum (strain ATCC 12428 / DSM 43021 / JCM 3005 / KCTC 9067 / NCIMB 10171 / NRRL 2505 / NI 9100).